The primary structure comprises 294 residues: 4-hydroxy-tetrahydrodipicolinate synthase (294 aa).

Pyruvate is bound at residue T44. Residue Y132 is the Proton donor/acceptor of the active site. The active-site Schiff-base intermediate with substrate is the K160. Residue I205 participates in pyruvate binding.

The protein belongs to the DapA family. Homotetramer; dimer of dimers.

The protein localises to the cytoplasm. The catalysed reaction is L-aspartate 4-semialdehyde + pyruvate = (2S,4S)-4-hydroxy-2,3,4,5-tetrahydrodipicolinate + H2O + H(+). The protein operates within amino-acid biosynthesis; L-lysine biosynthesis via DAP pathway; (S)-tetrahydrodipicolinate from L-aspartate: step 3/4. Catalyzes the condensation of (S)-aspartate-beta-semialdehyde [(S)-ASA] and pyruvate to 4-hydroxy-tetrahydrodipicolinate (HTPA). The polypeptide is 4-hydroxy-tetrahydrodipicolinate synthase (Kosmotoga olearia (strain ATCC BAA-1733 / DSM 21960 / TBF 19.5.1)).